The sequence spans 142 residues: Peptide methionine sulfoxide reductase MsrB (142 aa).

The 123-residue stretch at 10–132 (EEEWKKVLTP…NSVSLNFKTE (123 aa)) folds into the MsrB domain. Residues cysteine 49, cysteine 52, cysteine 98, and cysteine 101 each coordinate Zn(2+). Residue cysteine 121 is the Nucleophile of the active site.

It belongs to the MsrB Met sulfoxide reductase family. Zn(2+) serves as cofactor.

The enzyme catalyses L-methionyl-[protein] + [thioredoxin]-disulfide + H2O = L-methionyl-(R)-S-oxide-[protein] + [thioredoxin]-dithiol. This Methanosarcina barkeri (strain Fusaro / DSM 804) protein is Peptide methionine sulfoxide reductase MsrB.